Here is a 292-residue protein sequence, read N- to C-terminus: uncharacterized protein (292 aa).

A helical transmembrane segment spans residues 175 to 197 (VLNFYFTALPYAIDGIISGIGVF).

The protein localises to the membrane. This is an uncharacterized protein from Methanocaldococcus jannaschii (strain ATCC 43067 / DSM 2661 / JAL-1 / JCM 10045 / NBRC 100440) (Methanococcus jannaschii).